We begin with the raw amino-acid sequence, 265 residues long: Mlc titration factor A (265 aa).

Zn(2+) is bound by residues His111, His148, His152, and Glu211.

It belongs to the MtfA family. As to quaternary structure, interacts with Mlc. It depends on Zn(2+) as a cofactor.

The protein resides in the cytoplasm. Functionally, involved in the modulation of the activity of the glucose-phosphotransferase system (glucose-PTS). Interacts with the transcriptional repressor Mlc, preventing its interaction with DNA and leading to the modulation of expression of genes regulated by Mlc, including ptsG, which encodes the PTS system glucose-specific EIICB component. In terms of biological role, shows zinc-dependent metallopeptidase activity. This chain is Mlc titration factor A, found in Cronobacter sakazakii (strain ATCC BAA-894) (Enterobacter sakazakii).